The sequence spans 474 residues: Viral protein TPX (474 aa).

Positions 268–474 (VTVTPISSPS…TPTSTTSSNI (207 aa)) are disordered. The segment covering 275–365 (SPSPTPTPTP…PTPTPTPTPT (91 aa)) has biased composition (pro residues). One copy of the Thr-Pro(N) repeat lies at 278 to 367 (PTPTPTPTPT…PTPTPTPTPT (90 aa)). Residues 278–467 (PTPTPTPTPT…PTPTPTPTPT (190 aa)) are 3 Thr-Pro repeats regions and two near identical repeats. A repeat spans 368-377 (YDITYVVFDV). One copy of the Thr-Pro(N) repeat lies at 378-436 (TPSPTPTPTPTPTPTPTPTPTPTPTPTPTPTPTPTPTPTPTPTPTPTPTPTPTPTPTPT). Residues 380–434 (SPTPTPTPTPTPTPTPTPTPTPTPTPTPTPTPTPTPTPTPTPTPTPTPTPTPTPT) show a composition bias toward pro residues. Residues 437–446 (YDITYVIFDV) constitute a repeat. A Thr-Pro(N) repeat occupies 447–467 (TPSPTPTPTPTPTPTPTPTPT). The segment covering 449–465 (SPTPTPTPTPTPTPTPT) has biased composition (pro residues).

This is Viral protein TPX from Thermoproteus tenax virus 1 (strain VT3) (TTV1).